Consider the following 143-residue polypeptide: Transcriptional regulator MraZ (143 aa).

SpoVT-AbrB domains lie at 5–47 and 76–119; these read TYTP…PKEE and ADEQ…DAQA.

It belongs to the MraZ family. In terms of assembly, forms oligomers.

The protein resides in the cytoplasm. The protein localises to the nucleoid. The chain is Transcriptional regulator MraZ from Corynebacterium efficiens (strain DSM 44549 / YS-314 / AJ 12310 / JCM 11189 / NBRC 100395).